We begin with the raw amino-acid sequence, 429 residues long: Enolase (429 aa).

Q163 provides a ligand contact to (2R)-2-phosphoglycerate. The active-site Proton donor is the E205. 3 residues coordinate Mg(2+): D242, E286, and D313. (2R)-2-phosphoglycerate is bound by residues K338, R367, S368, and K389. Residue K338 is the Proton acceptor of the active site.

This sequence belongs to the enolase family. Mg(2+) is required as a cofactor.

It localises to the cytoplasm. The protein resides in the secreted. The protein localises to the cell surface. The catalysed reaction is (2R)-2-phosphoglycerate = phosphoenolpyruvate + H2O. It participates in carbohydrate degradation; glycolysis; pyruvate from D-glyceraldehyde 3-phosphate: step 4/5. Its function is as follows. Catalyzes the reversible conversion of 2-phosphoglycerate (2-PG) into phosphoenolpyruvate (PEP). It is essential for the degradation of carbohydrates via glycolysis. The chain is Enolase from Geobacter metallireducens (strain ATCC 53774 / DSM 7210 / GS-15).